The sequence spans 481 residues: N-succinylglutamate 5-semialdehyde dehydrogenase (481 aa).

206 to 211 (GSARTG) is a binding site for NAD(+). Catalysis depends on residues E229 and C263.

This sequence belongs to the aldehyde dehydrogenase family. AstD subfamily.

It carries out the reaction N-succinyl-L-glutamate 5-semialdehyde + NAD(+) + H2O = N-succinyl-L-glutamate + NADH + 2 H(+). It functions in the pathway amino-acid degradation; L-arginine degradation via AST pathway; L-glutamate and succinate from L-arginine: step 4/5. In terms of biological role, catalyzes the NAD-dependent reduction of succinylglutamate semialdehyde into succinylglutamate. In Sphingopyxis alaskensis (strain DSM 13593 / LMG 18877 / RB2256) (Sphingomonas alaskensis), this protein is N-succinylglutamate 5-semialdehyde dehydrogenase.